The chain runs to 237 residues: Ribosomal RNA small subunit methyltransferase G (237 aa).

Residues G72, L77, 123-124, and R138 contribute to the S-adenosyl-L-methionine site; that span reads AE. A disordered region spans residues 210–237; that stretch reads TALETGTKAAPSRSPRKPGGRKKRGRKR. A compositionally biased stretch (basic residues) spans 223-237; the sequence is SPRKPGGRKKRGRKR.

It belongs to the methyltransferase superfamily. RNA methyltransferase RsmG family.

It localises to the cytoplasm. Specifically methylates the N7 position of guanine in position 518 of 16S rRNA. In Thermobifida fusca (strain YX), this protein is Ribosomal RNA small subunit methyltransferase G.